A 520-amino-acid polypeptide reads, in one-letter code: Diacylglycerol O-acyltransferase 1 (520 aa).

Disordered stretches follow at residues 28–57 and 72–116; these read RRKS…GAPA and QGTA…AHRR. Low complexity predominate over residues 34–54; sequence DSSNGLLLSGSDNNSPSDDVG. Gly residues predominate over residues 81 to 98; sequence NNGGGDNNGGGRGGGEGR. A run of 7 helical transmembrane segments spans residues 126 to 146, 176 to 196, 207 to 227, 233 to 253, 276 to 296, 317 to 337, and 365 to 385; these read AIFK…LIAV, WPLF…FTVE, PVVI…PVYV, SAFL…LKLV, VSYY…TLCY, KLVI…NPIV, and VWLC…AELL. Residues 392-398 carry the FYXDWWN motif motif; sequence FYKDWWN. A run of 3 helical transmembrane segments spans residues 434-454, 457-477, and 487-507; these read LAII…IAVP, LFKL…FITN, and VGNM…CVLL. The active site involves H447.

Belongs to the membrane-bound acyltransferase family. Sterol o-acyltransferase subfamily. Interacts with LPCAT2 and LPAT2. In terms of tissue distribution, ubiquitous. Highest expression in young developing seeds.

It is found in the plastid. The protein localises to the chloroplast membrane. Its subcellular location is the endoplasmic reticulum membrane. The catalysed reaction is an acyl-CoA + a 1,2-diacyl-sn-glycerol = a triacyl-sn-glycerol + CoA. The enzyme catalyses 1,2-di-(9Z-octadecenoyl)-sn-glycerol + (9Z)-octadecenoyl-CoA = 1,2,3-tri-(9Z-octadecenoyl)-glycerol + CoA. It participates in glycerolipid metabolism; triacylglycerol biosynthesis. Its activity is regulated as follows. Partially inhibited by niacin. In terms of biological role, major contributor to triacylglycerol (TAG) synthesis and oil accumulation in seeds. Catalyzes the acylation of the sn-3 hydroxy group of sn-1,2-diacylglycerol using acyl-CoA. Can use palmitoyl-CoA and oleoyl-CoA as substrates. Can use oleoyl-CoA and linoleoyl-CoA as substrates. Has substrate preference for oleoyl-CoA compared to linoleoyl-CoA. Has complementary functions with PDAT1 that are essential for triacylglycerol synthesis and normal development of both seeds and pollen. In Arabidopsis thaliana (Mouse-ear cress), this protein is Diacylglycerol O-acyltransferase 1.